We begin with the raw amino-acid sequence, 293 residues long: Small ribosomal subunit biogenesis GTPase RsgA 2 (293 aa).

The CP-type G domain maps to 63-223 (SNELVRPPIA…VADTPGFSVL (161 aa)). Residues 112-115 (TKVD) and 166-174 (GQSGVGKSS) each bind GTP. The Zn(2+) site is built by cysteine 247, cysteine 252, histidine 254, and cysteine 260.

It belongs to the TRAFAC class YlqF/YawG GTPase family. RsgA subfamily. In terms of assembly, monomer. Associates with 30S ribosomal subunit, binds 16S rRNA. Zn(2+) is required as a cofactor.

It localises to the cytoplasm. Functionally, one of several proteins that assist in the late maturation steps of the functional core of the 30S ribosomal subunit. Helps release RbfA from mature subunits. May play a role in the assembly of ribosomal proteins into the subunit. Circularly permuted GTPase that catalyzes slow GTP hydrolysis, GTPase activity is stimulated by the 30S ribosomal subunit. The protein is Small ribosomal subunit biogenesis GTPase RsgA 2 of Oceanobacillus iheyensis (strain DSM 14371 / CIP 107618 / JCM 11309 / KCTC 3954 / HTE831).